The following is a 130-amino-acid chain: Small ribosomal subunit protein uS11 (130 aa).

It belongs to the universal ribosomal protein uS11 family. Part of the 30S ribosomal subunit. Interacts with proteins S7 and S18. Binds to IF-3.

In terms of biological role, located on the platform of the 30S subunit, it bridges several disparate RNA helices of the 16S rRNA. Forms part of the Shine-Dalgarno cleft in the 70S ribosome. This chain is Small ribosomal subunit protein uS11, found in Thermotoga petrophila (strain ATCC BAA-488 / DSM 13995 / JCM 10881 / RKU-1).